A 61-amino-acid chain; its full sequence is Small ribosomal subunit protein uS14 (61 aa).

The Zn(2+) site is built by Cys24, Cys27, Cys40, and Cys43.

The protein belongs to the universal ribosomal protein uS14 family. Zinc-binding uS14 subfamily. As to quaternary structure, part of the 30S ribosomal subunit. Contacts proteins S3 and S10. The cofactor is Zn(2+).

Binds 16S rRNA, required for the assembly of 30S particles and may also be responsible for determining the conformation of the 16S rRNA at the A site. The polypeptide is Small ribosomal subunit protein uS14 (Caldicellulosiruptor bescii (strain ATCC BAA-1888 / DSM 6725 / KCTC 15123 / Z-1320) (Anaerocellum thermophilum)).